We begin with the raw amino-acid sequence, 1097 residues long: Protein kinase C-like 1 (1097 aa).

REM-1 domains are found at residues 2–76 and 106–183; these read STSQ…QMQR and KYEC…FSIN. The region spanning 189 to 311 is the C2 domain; it reads RDYEIMDSTK…AKDQGSSGWL (123 aa). The interval 304-359 is disordered; sequence DQGSSGWLPAANLPQTGGSGAGTGSSMTGGASYGATSPLPAHNDLRPSVSPSSDAK. Residues 327–340 are compositionally biased toward low complexity; it reads GSSMTGGASYGATS. Phorbol-ester/DAG-type zinc fingers lie at residues 415-462 and 480-530; these read GHQF…VTKC and PHRF…PDFC. Disordered regions lie at residues 548 to 594, 615 to 646, and 724 to 763; these read KVSP…LRPA, YQEP…LSFE, and ETSH…RRKR. Residues 574 to 583 are compositionally biased toward basic and acidic residues; sequence PSMDSEETLH. A compositionally biased stretch (low complexity) spans 730-741; that stretch reads QQNQQVQQVQQQ. The segment covering 747–763 has biased composition (basic residues); that stretch reads QRTHSSGKSGKSKRRKR. In terms of domain architecture, Protein kinase spans 770–1029; it reads FQFLAVLGKG…AEEIMEHPYF (260 aa). ATP is bound by residues 776–784 and K799; that span reads LGKGNFGKV. D895 acts as the Proton acceptor in catalysis. One can recognise an AGC-kinase C-terminal domain in the interval 1030–1097; it reads HDVNFDDVLN…FSHISDNATI (68 aa).

This sequence belongs to the protein kinase superfamily. AGC Ser/Thr protein kinase family. PKC subfamily.

It catalyses the reaction L-seryl-[protein] + ATP = O-phospho-L-seryl-[protein] + ADP + H(+). The enzyme catalyses L-threonyl-[protein] + ATP = O-phospho-L-threonyl-[protein] + ADP + H(+). Functionally, necessary for osmotic stability. This chain is Protein kinase C-like 1 (PKC1), found in Candida albicans (Yeast).